The following is a 225-amino-acid chain: MPRHSRAKRAPRPSANNSKSPNDDDTAFRSPEPEDGTDYGLEFTTSQLTLQDNNRRSSTLRRDAGRRQPAARDSSTSGEEEDQENRYPTTRSPQTRRMTVQQESKTRAAGPVAAQNQTRRRKAANPMSRAKRMDREIRRLQHHPGTLIPKLPFSRLVREFIVKYSDDEPLRVTEGALLAMQESCEMYLTQRLADSYMLTKHRNRVTLEVRDMALMAYICDRGRQF.

Residues 1–11 (MPRHSRAKRAP) are compositionally biased toward basic residues. The interval 1-131 (MPRHSRAKRA…KAANPMSRAK (131 aa)) is disordered. Polar residues predominate over residues 43–52 (FTTSQLTLQD). Phosphoserine occurs at positions 74 and 75. Residue Thr76 is modified to Phosphothreonine. Phosphoserine is present on Ser77. Over residues 86 to 103 (RYPTTRSPQTRRMTVQQE) the composition is skewed to polar residues. An H3-like region spans residues 133–225 (MDREIRRLQH…AYICDRGRQF (93 aa)).

It belongs to the histone H3 family. As to quaternary structure, forms a nucleosome-like histone octamer containing two molecules each of H2A, H2B, cid and H4 assembled in one cid-H4 heterotetramer and two H2A-H2B heterodimers. The cid-H4 heterotetramer is more compact and structurally more rigid than corresponding H3-H4 heterotetramers. Interacts with the condensin subunit Cap-G. Interacts with Chrac-14.

It localises to the nucleus. The protein localises to the chromosome. It is found in the centromere. Its subcellular location is the kinetochore. Histone H3-like variant which exclusively replaces conventional H3 in the nucleosome core of centromeric chromatin at the inner plate of the kinetochore. Required for recruitment and assembly of kinetochore proteins, mitotic progression and chromosome segregation. May serve as an epigenetic mark that propagates centromere identity through replication and cell division. The polypeptide is Histone H3-like centromeric protein cid (Drosophila melanogaster (Fruit fly)).